Reading from the N-terminus, the 262-residue chain is tRNA U34 carboxymethyltransferase (262 aa).

Carboxy-S-adenosyl-L-methionine-binding positions include Lys25, Trp39, Lys44, Gly63, Val114–Glu115, Tyr135, and Arg250.

The protein belongs to the class I-like SAM-binding methyltransferase superfamily. CmoB family. In terms of assembly, homotetramer.

It carries out the reaction carboxy-S-adenosyl-L-methionine + 5-hydroxyuridine(34) in tRNA = 5-carboxymethoxyuridine(34) in tRNA + S-adenosyl-L-homocysteine + H(+). In terms of biological role, catalyzes carboxymethyl transfer from carboxy-S-adenosyl-L-methionine (Cx-SAM) to 5-hydroxyuridine (ho5U) to form 5-carboxymethoxyuridine (cmo5U) at position 34 in tRNAs. The sequence is that of tRNA U34 carboxymethyltransferase from Helicobacter acinonychis (strain Sheeba).